A 575-amino-acid polypeptide reads, in one-letter code: Phosphoenolpyruvate-protein phosphotransferase (575 aa).

Histidine 189 functions as the Tele-phosphohistidine intermediate in the catalytic mechanism. Phosphoenolpyruvate-binding residues include arginine 296 and arginine 332. The Mg(2+) site is built by glutamate 431 and aspartate 455. Phosphoenolpyruvate is bound by residues 454 to 455 (ND) and arginine 465. Cysteine 502 serves as the catalytic Proton donor.

It belongs to the PEP-utilizing enzyme family. Homodimer. It depends on Mg(2+) as a cofactor.

It is found in the cytoplasm. The enzyme catalyses L-histidyl-[protein] + phosphoenolpyruvate = N(pros)-phospho-L-histidyl-[protein] + pyruvate. Its function is as follows. General (non sugar-specific) component of the phosphoenolpyruvate-dependent sugar phosphotransferase system (sugar PTS). This major carbohydrate active-transport system catalyzes the phosphorylation of incoming sugar substrates concomitantly with their translocation across the cell membrane. Enzyme I transfers the phosphoryl group from phosphoenolpyruvate (PEP) to the phosphoryl carrier protein (HPr). The chain is Phosphoenolpyruvate-protein phosphotransferase (ptsI) from Haemophilus influenzae (strain ATCC 51907 / DSM 11121 / KW20 / Rd).